Here is a 503-residue protein sequence, read N- to C-terminus: Cobyric acid synthase (503 aa).

Residues 260 to 453 (KIGVAAIYFP…FHALFDESSV (194 aa)) enclose the GATase cobBQ-type domain. C341 serves as the catalytic Nucleophile. H445 is a catalytic residue.

Belongs to the CobB/CobQ family. CobQ subfamily.

Its pathway is cofactor biosynthesis; adenosylcobalamin biosynthesis. Catalyzes amidations at positions B, D, E, and G on adenosylcobyrinic A,C-diamide. NH(2) groups are provided by glutamine, and one molecule of ATP is hydrogenolyzed for each amidation. This chain is Cobyric acid synthase, found in Pelodictyon phaeoclathratiforme (strain DSM 5477 / BU-1).